The primary structure comprises 495 residues: 4-aminobutyrate aminotransferase (495 aa).

160–161 (GS) provides a ligand contact to pyridoxal 5'-phosphate. Arg216 contacts substrate. An N6-(pyridoxal phosphate)lysine modification is found at Lys350. Pyridoxal 5'-phosphate is bound at residue Thr374.

This sequence belongs to the class-III pyridoxal-phosphate-dependent aminotransferase family. Homodimer. Requires pyridoxal 5'-phosphate as cofactor.

The enzyme catalyses 4-aminobutanoate + 2-oxoglutarate = succinate semialdehyde + L-glutamate. This chain is 4-aminobutyrate aminotransferase (gabT), found in Dictyostelium discoideum (Social amoeba).